Reading from the N-terminus, the 270-residue chain is tRNA pseudouridine synthase A (270 aa).

Asp60 serves as the catalytic Nucleophile. Tyr118 contributes to the substrate binding site.

Belongs to the tRNA pseudouridine synthase TruA family. Homodimer.

The catalysed reaction is uridine(38/39/40) in tRNA = pseudouridine(38/39/40) in tRNA. Its function is as follows. Formation of pseudouridine at positions 38, 39 and 40 in the anticodon stem and loop of transfer RNAs. The sequence is that of tRNA pseudouridine synthase A from Salmonella typhimurium (strain LT2 / SGSC1412 / ATCC 700720).